A 310-amino-acid polypeptide reads, in one-letter code: DnaJ-like protein MG002 (310 aa).

The J domain occupies 1–66; that stretch reads MNLYDLLELP…KEKYDSMLKV (66 aa).

The protein is DnaJ-like protein MG002 of Mycoplasma genitalium (strain ATCC 33530 / DSM 19775 / NCTC 10195 / G37) (Mycoplasmoides genitalium).